Consider the following 401-residue polypeptide: Adaptive-response sensory kinase SasA (401 aa).

Residues 175–400 form the Histidine kinase domain; that stretch reads MLVHDLRNPL…WFHFTLPVYP (226 aa). Phosphohistidine; by autocatalysis is present on histidine 178.

In terms of assembly, homooligomerizes. Interacts with KaiC. Participates in the KaiABC clock complex, whose core is composed of a KaiC homohexamer, 6 KaiB and up to 6 KaiA dimers. SasA and KaiB(fs) compete to bind to KaiC.

The enzyme catalyses ATP + protein L-histidine = ADP + protein N-phospho-L-histidine.. Functionally, member of the two-component regulatory system SasA/RpaA involved in genome-wide circadian gene expression. One of several clock output pathways. Participates in the Kai clock protein complex, the main circadian regulator in cyanobacteria, via its interaction with KaiC. KaiC enhances the autophosphorylation activity of SasA, which then transfers its phosphate group to RpaA to activate it. In addition to its output function, recruits fold-shifted KaiB (KaiB(fs)) to KaiC to cooperatively form the KaiB(6):KaiC(6) complex (independent of SasA kinase activity). Required for robustness of the circadian rhythm of gene expression and is involved in clock output, also required for adaptation to light/dark cycles. The polypeptide is Adaptive-response sensory kinase SasA (Nostoc sp. (strain PCC 7120 / SAG 25.82 / UTEX 2576)).